We begin with the raw amino-acid sequence, 486 residues long: Secreted protein C (486 aa).

The signal sequence occupies residues methionine 1 to alanine 22. The tract at residues glycine 30 to histidine 332 is disordered. The N-linked (GlcNAc...) asparagine glycan is linked to asparagine 37. Positions serine 41–glutamine 60 are enriched in gly residues. A compositionally biased stretch (low complexity) spans serine 61–serine 318. N-linked (GlcNAc...) asparagine glycans are attached at residues asparagine 73, asparagine 74, asparagine 83, asparagine 112, asparagine 129, asparagine 149, and asparagine 174.

Belongs to the Sct family.

It localises to the secreted. In Dictyostelium discoideum (Social amoeba), this protein is Secreted protein C.